We begin with the raw amino-acid sequence, 236 residues long: Small ribosomal subunit protein uS3 (236 aa).

The region spanning 39 to 107 is the KH type-2 domain; the sequence is IREILHKELK…DVVINIVEIR (69 aa). The interval 213–236 is disordered; the sequence is MAQDKRMNEGGGESSQPRSRRDAA.

Belongs to the universal ribosomal protein uS3 family. Part of the 30S ribosomal subunit. Forms a tight complex with proteins S10 and S14.

Binds the lower part of the 30S subunit head. Binds mRNA in the 70S ribosome, positioning it for translation. The chain is Small ribosomal subunit protein uS3 from Bradyrhizobium sp. (strain BTAi1 / ATCC BAA-1182).